The primary structure comprises 557 residues: Ras-specific guanine nucleotide-releasing factor RalGPS2 (557 aa).

The Ras-GEF domain occupies 49-287 (TPEEYAGQIT…YKLSLKIEPG (239 aa)). The segment at 283–314 (KIEPGTSTPRSAASREDLVGPEVGASPQSGRK) is disordered. Phosphoserine occurs at positions 293, 296, 308, and 311. At threonine 326 the chain carries Phosphothreonine. Residues 327–330 (PPSP) carry the PXXP motif. A phosphoserine mark is found at serine 329 and serine 343. Threonine 361 is modified (phosphothreonine). Residues 368–409 (RHLLDDSVMEPHAPSRGQAESSTLSSGISIGSSDGSELSEET) form a disordered region. At serine 374 the chain carries Phosphoserine. Low complexity predominate over residues 387–403 (ESSTLSSGISIGSSDGS). The region spanning 431–543 (AVTIQGVLRR…WFKHLSAACQ (113 aa)) is the PH domain. Positions 433–557 (TIQGVLRRKT…QVPTNLMTFE (125 aa)) are required for stimulation of nucleotide exchange by RALA.

As to quaternary structure, interacts with the SH3 domains of GRB2 and PLCG1. Interacts with RALA.

It localises to the cytoplasm. The protein resides in the cell membrane. Guanine nucleotide exchange factor for the small GTPase RALA. May be involved in cytoskeletal organization. May also be involved in the stimulation of transcription in a Ras-independent fashion. This Macaca fascicularis (Crab-eating macaque) protein is Ras-specific guanine nucleotide-releasing factor RalGPS2 (RALGPS2).